Reading from the N-terminus, the 235-residue chain is Octanoyltransferase (235 aa).

A BPL/LPL catalytic domain is found at 30 to 214 (NELEDTLLLL…YFGKVFGAKF (185 aa)). Residues 75-82 (RGGDVTYH), 144-146 (AIG), and 157-159 (GFA) contribute to the substrate site. Residue cysteine 175 is the Acyl-thioester intermediate of the active site.

Belongs to the LipB family.

Its subcellular location is the cytoplasm. It catalyses the reaction octanoyl-[ACP] + L-lysyl-[protein] = N(6)-octanoyl-L-lysyl-[protein] + holo-[ACP] + H(+). It participates in protein modification; protein lipoylation via endogenous pathway; protein N(6)-(lipoyl)lysine from octanoyl-[acyl-carrier-protein]: step 1/2. Catalyzes the transfer of endogenously produced octanoic acid from octanoyl-acyl-carrier-protein onto the lipoyl domains of lipoate-dependent enzymes. Lipoyl-ACP can also act as a substrate although octanoyl-ACP is likely to be the physiological substrate. This chain is Octanoyltransferase, found in Caldicellulosiruptor saccharolyticus (strain ATCC 43494 / DSM 8903 / Tp8T 6331).